Consider the following 630-residue polypeptide: MAAGVAAWLPFARAAAIGWMPVASGPMPAPPRQERKRTQDALIVLNVSGTRFQTWQDTLERYPDTLLGSSERDFFYHPETQQYFFDRDPDIFRHILNFYRTGKLHYPRHECISAYDEELAFFGLIPEIIGDCCYEEYKDRRRENAERLQDDADTDNTGESALPTMTARQRVWRAFENPHTSTMALVFYYVTGFFIAVSVIANVVETVPCGSSPGHIKELPCGERYAVAFFCLDTACVMIFTVEYLLRLAAAPSRYRFVRSVMSIIDVVAILPYYIGLVMTDNEDVSGAFVTLRVFRVFRIFKFSRHSQGLRILGYTLKSCASELGFLLFSLTMAIIIFATVMFYAEKGSSASKFTSIPAAFWYTIVTMTTLGYGDMVPKTIAGKIFGSICSLSGVLVIALPVPVIVSNFSRIYHQNQRADKRRAQKKARLARIRAAKSGSANAYMQSKRNGLLSNQLQSSEDEPAFVSKSGSSFETQHHHLLHCLEKTTNHEFVDEQVFEESCMEVATVNRPSSHSPSLSSQQGVTSTCCSRRHKKSFRIPNANVSGSHRGSVQELSTIQIRCVERTPLSNSRSSLNAKMEECVKLNCEQPYVTTAIISIPTPPVTTPEGDDRPESPEYSGGNIVRVSAL.

Residues 1 to 184 are Cytoplasmic-facing; sequence MAAGVAAWLP…FENPHTSTMA (184 aa). The interval 2-20 is interaction with KCNIP1, KCNIP2, and other family members; sequence AAGVAAWLPFARAAAIGWM. At Thr38 the chain carries Phosphothreonine. Residues 71-90 form an interaction with KCNIP1 region; it reads ERDFFYHPETQQYFFDRDPD. Residues His105, Cys111, Cys132, and Cys133 each contribute to the Zn(2+) site. The helical transmembrane segment at 185-206 threads the bilayer; sequence LVFYYVTGFFIAVSVIANVVET. Residues 207–226 lie on the Extracellular side of the membrane; it reads VPCGSSPGHIKELPCGERYA. The chain crosses the membrane as a helical span at residues 227–249; sequence VAFFCLDTACVMIFTVEYLLRLA. The Cytoplasmic segment spans residues 250–256; sequence AAPSRYR. Residues 257-281 form a helical membrane-spanning segment; it reads FVRSVMSIIDVVAILPYYIGLVMTD. The Extracellular segment spans residues 282-287; that stretch reads NEDVSG. A helical; Voltage-sensor transmembrane segment spans residues 288 to 307; the sequence is AFVTLRVFRVFRIFKFSRHS. Residues 308 to 321 are Cytoplasmic-facing; the sequence is QGLRILGYTLKSCA. The S4-S5 linker stretch occupies residues 308–321; the sequence is QGLRILGYTLKSCA. Residues 322–345 form a helical membrane-spanning segment; that stretch reads SELGFLLFSLTMAIIIFATVMFYA. Residues 346-357 lie on the Extracellular side of the membrane; that stretch reads EKGSSASKFTSI. The helical intramembrane region spans 358-369; sequence PAAFWYTIVTMT. K(+) is bound by residues Thr370, Leu371, Gly372, and Tyr373. The short motif at 370–375 is the Selectivity filter element; it reads TLGYGD. An intramembrane segment occupies 370 to 377; sequence TLGYGDMV. The Extracellular portion of the chain corresponds to 378–380; sequence PKT. The chain crosses the membrane as a helical span at residues 381 to 403; it reads IAGKIFGSICSLSGVLVIALPVP. The Cytoplasmic portion of the chain corresponds to 404 to 630; it reads VIVSNFSRIY…GGNIVRVSAL (227 aa). Phosphoserine is present on Ser438. The tract at residues 474-489 is required for dendritic targeting; that stretch reads FETQHHHLLHCLEKTT. An important for normal channel activation and inactivation, for interaction with KCNIP2, and probably other family members as well region spans residues 474–630; sequence FETQHHHLLH…GGNIVRVSAL (157 aa). Phosphoserine is present on residues Ser548, Ser552, Ser572, and Ser575. The segment at 600-623 is disordered; that stretch reads IPTPPVTTPEGDDRPESPEYSGGN. Residues Thr602 and Thr607 each carry the phosphothreonine modification. Ser616 carries the post-translational modification Phosphoserine. A PDZ-binding motif is present at residues 627–630; sequence VSAL.

It belongs to the potassium channel family. D (Shal) (TC 1.A.1.2) subfamily. Kv4.2/KCND2 sub-subfamily. As to quaternary structure, homotetramer or heterotetramer with KCND1 or KCND3. Associates with the regulatory subunits KCNIP2, KCNIP3 and KCNIP4. Interacts with the regulatory subunit KCNIP1; this interaction mediates the capture of both the N- and C-terminus of KCND2, preventing N-type inactivation and stabilizing the S6 conformation, thereby accelerating closed state inactivation and recovery. Interacts with DPP10, DLG4 and DLG1. In vivo, probably exists as heteromeric complex containing variable proportions of KCND1, KCND2, KCND3, KCNIP1, KCNIP2, KCNIP3, KCNIP4, DPP6 and DPP10. The tetrameric channel can associate with up to four regulatory subunits, such as KCNIP2 or KCNIP4. Interaction with KCNIP3 promotes tetramerization and formation of a functional potassium channel. Interaction with four KCNIP4 chains does not reduce interaction with DPP10. Probably part of a complex consisting of KCNIP1, KCNIP2 isoform 3 and KCND2. Interacts with FLNA and FLNC. Interacts with NCS1/FREQ. Identified in a complex with cAMP-dependent protein kinase (PKA), CAV3, AKAP6 and KCND3 in cardiac myocytes. Interacts (via S1 and S2 helices) with DPP6; this interaction stabilizes the conformation of the S1-S2 helices and facilitates S4 conformational change, including S4 sliding up and down, thereby accelerating activation, inactivation, and recovery. In terms of processing, phosphorylation at Ser-438 in response to MAPK activation is increased in stimulated dendrites. Interaction with KCNIP2 and DPP6 propomtes phosphorylation by PKA at Ser-552. Phosphorylation at Ser-552 has no effect on interaction with KCNIP3, but is required for the regulation of channel activity by KCNIP3. Phosphorylation at Ser-552 leads to KCND2 internalization. Phosphorylated by MAPK in response to signaling via the metabotropic glutamate receptor GRM5. Phosphorylation at Ser-616 is required for the down-regulation of neuronal A-type currents in response to signaling via GRM5. As to expression, detected in brain cortex, hippocampus, dentate gyrus, thalamus and cerebellum. Detected in neurons from the primary visual cortex. Detected in the supraoptic nucleus in hypothalamus, in hippocampus and the habenular nucleus of the thalamus. Detected in the bed nucleus of the stria terminalis. Detected in dendritic fields in the hippocampus CA1 layer, in stratum radiatum, stratum oriens, stratum lacunosum-moleculare and stratum pyramidale. Detected in dendritic fields in the hippocampus CA3 layer and in dentate gyrus. Detected in the cerebellum granule cell layer, where it localizes at synapses. Detected in the main olfactory bulb, especially in the granule cell layer and the external plexiform layer, but also the mitral layer. Detected in heart atrium and ventricle. Detected in heart left ventricle (at protein level). Highly expressed in heart and throughout the brain, with similar levels in cortex and hypothalamus, and much higher levels in hippocampus, dentate gyrus and the habenular nucleus of the thalamus. Detected in brain, and at lower levels in heart atrium and ventricle. Detected in neurons from the bed nucleus of the stria terminalis. Detected in aorta, cardiac and smooth muscle.

The protein resides in the cell membrane. The protein localises to the cell projection. It is found in the dendrite. It localises to the synapse. Its subcellular location is the perikaryon. The protein resides in the postsynaptic cell membrane. The protein localises to the dendritic spine. It is found in the sarcolemma. It localises to the cell junction. Its subcellular location is the membrane. The protein resides in the caveola. It carries out the reaction K(+)(in) = K(+)(out). Inhibited by 5 mM 4-aminopyridine (4-AP). Not inhibited by dendrotoxins and by tetraethylammonium (TEA). Inhibited by 10 mM flecainide and 20 mM quinidine. Inhibited by the heteropodatoxins HpTx(1), HpTx(2), and HpTx(3). In terms of biological role, voltage-gated potassium channel that mediates transmembrane potassium transport in excitable membranes, primarily in the brain, but also in rodent heart. Mediates the major part of the dendritic A-type current I(SA) in brain neurons. This current is activated at membrane potentials that are below the threshold for action potentials. It regulates neuronal excitability, prolongs the latency before the first spike in a series of action potentials, regulates the frequency of repetitive action potential firing, shortens the duration of action potentials and regulates the back-propagation of action potentials from the neuronal cell body to the dendrites. Contributes to the regulation of the circadian rhythm of action potential firing in suprachiasmatic nucleus neurons, which regulates the circadian rhythm of locomotor activity. Functions downstream of the metabotropic glutamate receptor GRM5 and plays a role in neuronal excitability and in nociception mediated by activation of GRM5. Mediates the transient outward current I(to) in rodent heart left ventricle apex cells, but not in human heart, where this current is mediated by another family member. Forms tetrameric potassium-selective channels through which potassium ions pass in accordance with their electrochemical gradient. The channel alternates between opened and closed conformations in response to the voltage difference across the membrane. Can form functional homotetrameric channels and heterotetrameric channels that contain variable proportions of KCND2 and KCND3; channel properties depend on the type of pore-forming alpha subunits that are part of the channel. In vivo, membranes probably contain a mixture of heteromeric potassium channel complexes. Interaction with specific isoforms of the regulatory subunits KCNIP1, KCNIP2, KCNIP3 or KCNIP4 strongly increases expression at the cell surface and thereby increases channel activity; it modulates the kinetics of channel activation and inactivation, shifts the threshold for channel activation to more negative voltage values, shifts the threshold for inactivation to less negative voltages and accelerates recovery after inactivation. Likewise, interaction with DPP6 or DPP10 promotes expression at the cell membrane and regulates both channel characteristics and activity. Upon depolarization, the channel goes from a resting closed state (C state) to an activated but non-conducting state (C* state), from there, the channel may either inactivate (I state) or open (O state). This is A-type voltage-gated potassium channel KCND2 from Rattus norvegicus (Rat).